Reading from the N-terminus, the 254-residue chain is NAD-dependent protein deacylase (254 aa).

One can recognise a Deacetylase sirtuin-type domain in the interval 1-250 (MERLEEARKR…LPPSPEDQAE (250 aa)). 22-41 (GAGISKPSGIPTFRDAEGLW) contributes to the NAD(+) binding site. 2 residues coordinate substrate: Tyr-66 and Arg-69. 104–107 (QNVD) is an NAD(+) binding site. His-122 serves as the catalytic Proton acceptor. Zn(2+) contacts are provided by Cys-130, Cys-133, Cys-149, and Cys-152. NAD(+) contacts are provided by residues 189 to 191 (GTS), 215 to 217 (NPE), and Ala-233.

It belongs to the sirtuin family. Class III subfamily. Requires Zn(2+) as cofactor.

It localises to the cytoplasm. It catalyses the reaction N(6)-acetyl-L-lysyl-[protein] + NAD(+) + H2O = 2''-O-acetyl-ADP-D-ribose + nicotinamide + L-lysyl-[protein]. The catalysed reaction is N(6)-succinyl-L-lysyl-[protein] + NAD(+) + H2O = 2''-O-succinyl-ADP-D-ribose + nicotinamide + L-lysyl-[protein]. Its function is as follows. NAD-dependent lysine deacetylase and desuccinylase that specifically removes acetyl and succinyl groups on target proteins. Modulates the activities of several proteins which are inactive in their acylated form. The sequence is that of NAD-dependent protein deacylase from Thermus thermophilus (strain ATCC 27634 / DSM 579 / HB8).